We begin with the raw amino-acid sequence, 201 residues long: Small ribosomal subunit protein uS4 (201 aa).

Residues 21–43 (GTGKELNRRPYAPGDHGQGRRQK) form a disordered region. Residues 93 to 153 (RRLDNMVYRL…EKSKDMAIIK (61 aa)) enclose the S4 RNA-binding domain.

The protein belongs to the universal ribosomal protein uS4 family. Part of the 30S ribosomal subunit. Contacts protein S5. The interaction surface between S4 and S5 is involved in control of translational fidelity.

Functionally, one of the primary rRNA binding proteins, it binds directly to 16S rRNA where it nucleates assembly of the body of the 30S subunit. Its function is as follows. With S5 and S12 plays an important role in translational accuracy. In Levilactobacillus brevis (strain ATCC 367 / BCRC 12310 / CIP 105137 / JCM 1170 / LMG 11437 / NCIMB 947 / NCTC 947) (Lactobacillus brevis), this protein is Small ribosomal subunit protein uS4.